A 984-amino-acid chain; its full sequence is Zinc finger and BTB domain-containing protein 4 (984 aa).

One can recognise a BTB domain in the interval cysteine 30 to glycine 131. Lysine 40 is covalently cross-linked (Glycyl lysine isopeptide (Lys-Gly) (interchain with G-Cter in SUMO2)). 3 disordered regions span residues threonine 71 to valine 104, methionine 172 to phenylalanine 210, and threonine 227 to leucine 262. The span at serine 74–serine 88 shows a compositional bias: low complexity. Residues valine 165–leucine 324 form an interaction with CBFA2T3 region. A C2H2-type 1; atypical zinc finger spans residues phenylalanine 210–cysteine 232. Gly residues predominate over residues alanine 242 to alanine 255. 3 C2H2-type zinc fingers span residues tyrosine 285 to histidine 307, tyrosine 313 to histidine 335, and tyrosine 341 to histidine 364. Serine 367 is subject to Phosphoserine. Residues glycine 461–proline 575 are disordered. Positions alanine 467–glycine 477 are enriched in gly residues. Low complexity-rich tracts occupy residues serine 478–threonine 488 and alanine 507–threonine 529. Residue lysine 548 forms a Glycyl lysine isopeptide (Lys-Gly) (interchain with G-Cter in SUMO2) linkage. Gly residues predominate over residues glycine 552–arginine 565. Lysine 590 participates in a covalent cross-link: Glycyl lysine isopeptide (Lys-Gly) (interchain with G-Cter in SUMO2). Disordered stretches follow at residues isoleucine 593 to arginine 696, arginine 713 to threonine 734, glutamine 756 to glycine 836, glycine 853 to glycine 876, and glutamine 947 to glycine 984. The segment covering serine 604–glutamate 627 has biased composition (acidic residues). Residues glutamate 628–leucine 637 show a composition bias toward basic and acidic residues. 2 consecutive C2H2-type zinc fingers follow at residues histidine 697–histidine 719 and phenylalanine 736–histidine 758. Residues threonine 766 and threonine 768 each carry the phosphothreonine; by HIPK2 modification. Low complexity predominate over residues alanine 807 to serine 819. The span at threonine 948 to proline 966 shows a compositional bias: pro residues. Threonine 955 carries the post-translational modification Phosphothreonine; by HIPK2.

In terms of assembly, interacts with HIPK2. Interacts with CBFA2T3. Interacts with ZBTB38. In terms of processing, phosphorylated by HIPK2. This phosphorylation reduces stability and triggers ZBTB4 protein degradation in response to DNA damage.

It is found in the nucleus. The protein resides in the chromosome. Functionally, transcriptional repressor with bimodal DNA-binding specificity. Represses transcription in a methyl-CpG-dependent manner. Binds with a higher affinity to methylated CpG dinucleotides in the consensus sequence 5'-CGCG-3' but can also bind to the non-methylated consensus sequence 5'-CTGCNA-3' also known as the consensus kaiso binding site (KBS). Can also bind specifically to a single methyl-CpG pair and can bind hemimethylated DNA but with a lower affinity compared to methylated DNA. Plays a role in postnatal myogenesis, may be involved in the regulation of satellite cells self-renewal. The polypeptide is Zinc finger and BTB domain-containing protein 4 (Zbtb4) (Rattus norvegicus (Rat)).